The sequence spans 197 residues: Fe/S biogenesis protein NfuA (197 aa).

Residues Cys155 and Cys158 each coordinate [4Fe-4S] cluster.

It belongs to the NfuA family. As to quaternary structure, homodimer. [4Fe-4S] cluster serves as cofactor.

Functionally, involved in iron-sulfur cluster biogenesis. Binds a 4Fe-4S cluster, can transfer this cluster to apoproteins, and thereby intervenes in the maturation of Fe/S proteins. Could also act as a scaffold/chaperone for damaged Fe/S proteins. The protein is Fe/S biogenesis protein NfuA of Pseudomonas syringae pv. syringae (strain B728a).